The primary structure comprises 106 residues: CLAVATA3/ESR (CLE)-related protein 21 (106 aa).

The signal sequence occupies residues 1 to 31; sequence MLILSSRYAMKRDVLIIVIFTVLVLIIISRS. N-linked (GlcNAc...) asparagine glycosylation occurs at Asn47. The span at 72–82 shows a compositional bias: basic residues; that stretch reads KVRRRSSRFRR. The disordered stretch occupies residues 72-106; that stretch reads KVRRRSSRFRRKTDGDEEEEEKRSIPTGPNPLHNK. Pro97 and Pro100 each carry hydroxyproline. Pro100 is a glycosylation site (O-linked (Ara...) hydroxyproline).

This sequence belongs to the CLV3/ESR signal peptide family. The O-glycosylation (arabinosylation) of the hydroxyproline Pro-100 enhances binding affinity of the CLE21p peptide for its receptor. Mostly expressed in leaves and apex, and, to a lower extent, in seedlings, flowers, stems and siliques.

It is found in the secreted. It localises to the extracellular space. Functionally, extracellular signal peptide that regulates cell fate. Represses root apical meristem maintenance. Regulates the transition of protophloem cells from proliferation to differentiation, thus impinging on postembryonic growth capacity of the root meristem; this signaling pathway requires CRN and CLV2. This Arabidopsis thaliana (Mouse-ear cress) protein is CLAVATA3/ESR (CLE)-related protein 21.